A 157-amino-acid polypeptide reads, in one-letter code: Small ribosomal subunit protein uS7 (157 aa).

It belongs to the universal ribosomal protein uS7 family. As to quaternary structure, part of the 30S ribosomal subunit. Contacts proteins S9 and S11.

One of the primary rRNA binding proteins, it binds directly to 16S rRNA where it nucleates assembly of the head domain of the 30S subunit. Is located at the subunit interface close to the decoding center, probably blocks exit of the E-site tRNA. The chain is Small ribosomal subunit protein uS7 from Delftia acidovorans (strain DSM 14801 / SPH-1).